Here is a 752-residue protein sequence, read N- to C-terminus: Photosystem I P700 chlorophyll a apoprotein A1 (752 aa).

Transmembrane regions (helical) follow at residues 73 to 96, 159 to 182, 198 to 222, 294 to 312, 349 to 372, 388 to 414, 436 to 458, and 533 to 551; these read IFAA…FHGA, LYVT…FHYH, LNHH…HVSA, ISHH…GHMY, WHAQ…HHMY, LCIF…IFMV, AIIS…LYVH, and FLVH…LILL. Positions 575 and 584 each coordinate [4Fe-4S] cluster. 2 helical membrane-spanning segments follow: residues 591–612 and 666–688; these read HVFL…HFSW and LSAY…MFLF. Residue His-677 coordinates chlorophyll a'. Residues Met-685 and Tyr-693 each coordinate chlorophyll a. Trp-694 provides a ligand contact to phylloquinone. The chain crosses the membrane as a helical span at residues 726–746; it reads AVGVAHYLLGGIATTWAFFHA.

The protein belongs to the PsaA/PsaB family. The PsaA/B heterodimer binds the P700 chlorophyll special pair and subsequent electron acceptors. PSI consists of a core antenna complex that captures photons, and an electron transfer chain that converts photonic excitation into a charge separation. The cyanobacterial PSI reaction center is composed of one copy each of PsaA,B,C,D,E,F,I,J,K,L,M and X, and forms trimeric complexes. The cofactor is PSI electron transfer chain: 5 chlorophyll a, 1 chlorophyll a', 2 phylloquinones and 3 4Fe-4S clusters. PSI core antenna: 90 chlorophyll a, 22 carotenoids, 3 phospholipids and 1 galactolipid. P700 is a chlorophyll a/chlorophyll a' dimer, A0 is one or more chlorophyll a, A1 is one or both phylloquinones and FX is a shared 4Fe-4S iron-sulfur center..

It localises to the cellular thylakoid membrane. The catalysed reaction is reduced [plastocyanin] + hnu + oxidized [2Fe-2S]-[ferredoxin] = oxidized [plastocyanin] + reduced [2Fe-2S]-[ferredoxin]. Its function is as follows. PsaA and PsaB bind P700, the primary electron donor of photosystem I (PSI), as well as the electron acceptors A0, A1 and FX. PSI is a plastocyanin/cytochrome c6-ferredoxin oxidoreductase, converting photonic excitation into a charge separation, which transfers an electron from the donor P700 chlorophyll pair to the spectroscopically characterized acceptors A0, A1, FX, FA and FB in turn. Oxidized P700 is reduced on the lumenal side of the thylakoid membrane by plastocyanin or cytochrome c6. The sequence is that of Photosystem I P700 chlorophyll a apoprotein A1 from Mastigocladus laminosus (Fischerella sp.).